A 101-amino-acid polypeptide reads, in one-letter code: Small ribosomal subunit protein uS14 (101 aa).

Belongs to the universal ribosomal protein uS14 family. As to quaternary structure, part of the 30S ribosomal subunit. Contacts proteins S3 and S10.

Binds 16S rRNA, required for the assembly of 30S particles and may also be responsible for determining the conformation of the 16S rRNA at the A site. This is Small ribosomal subunit protein uS14 from Blochmanniella floridana.